A 353-amino-acid chain; its full sequence is 2,4-diaminopentanoate dehydrogenase (353 aa).

It belongs to the DapB family. As to quaternary structure, homodimer.

The catalysed reaction is (2R,4S)-2,4-diaminopentanoate + NAD(+) + H2O = (2R)-2-amino-4-oxopentanoate + NH4(+) + NADH + H(+). It carries out the reaction (2R,4S)-2,4-diaminopentanoate + NADP(+) + H2O = (2R)-2-amino-4-oxopentanoate + NH4(+) + NADPH + H(+). With respect to regulation, inhibited by p-chloromercuribenzoate, iodoacetate and N-ethylmaleimide. In terms of biological role, involved in the ornithine fermentation pathway. Catalyzes the oxidative deamination of (2R,4S)-2,4-diaminopentanoate (DAP) to yield 2-amino-4-ketopentanoate (AKP). This is 2,4-diaminopentanoate dehydrogenase from Acetoanaerobium sticklandii (strain ATCC 12662 / DSM 519 / JCM 1433 / CCUG 9281 / NCIMB 10654 / HF) (Clostridium sticklandii).